The following is a 186-amino-acid chain: Imidazole glycerol phosphate synthase subunit HisH (186 aa).

The Glutamine amidotransferase type-1 domain maps to 1 to 186 (MIAIIDYGSG…KLLRNFGELA (186 aa)). C72 (nucleophile) is an active-site residue. Active-site residues include H167 and E169.

As to quaternary structure, heterodimer of HisH and HisF.

It is found in the cytoplasm. The catalysed reaction is 5-[(5-phospho-1-deoxy-D-ribulos-1-ylimino)methylamino]-1-(5-phospho-beta-D-ribosyl)imidazole-4-carboxamide + L-glutamine = D-erythro-1-(imidazol-4-yl)glycerol 3-phosphate + 5-amino-1-(5-phospho-beta-D-ribosyl)imidazole-4-carboxamide + L-glutamate + H(+). It catalyses the reaction L-glutamine + H2O = L-glutamate + NH4(+). It functions in the pathway amino-acid biosynthesis; L-histidine biosynthesis; L-histidine from 5-phospho-alpha-D-ribose 1-diphosphate: step 5/9. Its function is as follows. IGPS catalyzes the conversion of PRFAR and glutamine to IGP, AICAR and glutamate. The HisH subunit catalyzes the hydrolysis of glutamine to glutamate and ammonia as part of the synthesis of IGP and AICAR. The resulting ammonia molecule is channeled to the active site of HisF. This is Imidazole glycerol phosphate synthase subunit HisH from Picrophilus torridus (strain ATCC 700027 / DSM 9790 / JCM 10055 / NBRC 100828 / KAW 2/3).